A 2763-amino-acid polypeptide reads, in one-letter code: Large tegument protein deneddylase (2763 aa).

The deubiquitination activity stretch occupies residues 1–247; that stretch reads MDIIPPIAVT…CDTYFTDEQY (247 aa). A Peptidase C76 domain is found at 12-237; the sequence is AGVGSRNQFD…SSAVTLIYGS (226 aa). Residues Cys-32, Asp-168, and His-170 contribute to the active site. An interaction with inner tegument protein region spans residues 495 to 523; sequence LELFINLTILRLTGFVVENGTRTHHGATS. The interval 2456 to 2476 is disordered; sequence VRPAQPAQPAQPAQPAQTVQP. Repeat copies occupy residues 2458–2460, 2461–2463, 2464–2466, 2467–2469, and 2470–2472. The interval 2458 to 2472 is 5 X 3 AA repeats of P-A-Q; it reads PAQPAQPAQPAQPAQ. Over residues 2459 to 2476 the composition is skewed to low complexity; it reads AQPAQPAQPAQPAQTVQP.

The protein belongs to the herpesviridae large tegument protein family. Interacts with host CUL1 and CUL4A; these interactions inhibit the E3 ligase activity of cullins. Interacts with inner tegument protein. Interacts with capsid vertex specific component CVC2. Interacts with the major capsid protein/MCP.

The protein localises to the virion tegument. It localises to the host cytoplasm. The protein resides in the host nucleus. It catalyses the reaction Thiol-dependent hydrolysis of ester, thioester, amide, peptide and isopeptide bonds formed by the C-terminal Gly of ubiquitin (a 76-residue protein attached to proteins as an intracellular targeting signal).. In terms of biological role, large tegument protein that plays multiple roles in the viral cycle. During viral entry, remains associated with the capsid while most of the tegument is detached and participates in the capsid transport toward the host nucleus. Plays a role in the routing of the capsid at the nuclear pore complex and subsequent uncoating. Within the host nucleus, acts as a deneddylase and promotes the degradation of nuclear CRLs (cullin-RING ubiquitin ligases) and thereby stabilizes nuclear CRL substrates, while cytoplasmic CRLs remain unaffected. These modifications prevent host cell cycle S-phase progression and create a favorable environment allowing efficient viral genome replication. Participates later in the secondary envelopment of capsids. Indeed, plays a linker role for the association of the outer viral tegument to the capsids together with the inner tegument protein. This Homo sapiens (Human) protein is Large tegument protein deneddylase.